The following is a 402-amino-acid chain: MADPKYADLPGIARNEPDVYETSDLPEDDQAEFDAEELSSTSVEHIIVNPNAAYDKFKDKRVGTKGLDFSDRIGKTKRTGYESGDYEMLGEGLGVKETPQQKYQRLLHEVQELTTEVEKIKTTVKESATEEKLTPVVLAKQLAALKQQLVASHLEKLLGPDAAINLADPDGALAKRLLLQLEATKSSKGSSGGKSTGGTPPDSSLVTYELHSRPEQDKFSQAAKVAELEKRLTELEATVRCDQDAQNPLSAGLQGACLMETVELLQAKVNALDLAVLDQVEARLQSVLGKVNEIAKHKASVEDADTQNKVHQLYETIQRWSPVASTLPELVQRLVTIKQLHEQAMQFGQLLTHLDTTQQMMASSLKDNTALLTQVQTTMRENLATVEGNFASIDARMKKLGK.

The segment at 1 to 24 (MADPKYADLPGIARNEPDVYETSD) is disordered. The residue at position 2 (Ala2) is an N-acetylalanine. A Phosphotyrosine modification is found at Tyr6. Ser83 is subject to Phosphoserine. Position 86 is a phosphotyrosine (Tyr86). A coiled-coil region spans residues 100–130 (QQKYQRLLHEVQELTTEVEKIKTTVKESATE). Phosphothreonine occurs at positions 134 and 199. The segment at 185–205 (KSSKGSSGGKSTGGTPPDSSL) is disordered. Residues 215 to 247 (EQDKFSQAAKVAELEKRLTELEATVRCDQDAQN) adopt a coiled-coil conformation. The residue at position 321 (Ser321) is a Phosphoserine.

Belongs to the dynactin subunit 2 family. Subunit of dynactin, a multiprotein complex part of a tripartite complex with dynein and a adapter, such as BICDL1, BICD2 or HOOK3. The dynactin complex is built around ACTR1A/ACTB filament and consists of an actin-related filament composed of a shoulder domain, a pointed end and a barbed end. Its length is defined by its flexible shoulder domain. The soulder is composed of 2 DCTN1 subunits, 4 DCTN2 and 2 DCTN3. The 4 DCNT2 (via N-terminus) bind the ACTR1A filament and act as molecular rulers to determine the length. The pointed end is important for binding dynein-dynactin cargo adapters and consists of 4 subunits: ACTR10, DCNT4, DCTN5 and DCTN6. The barbed end is composed of a CAPZA1:CAPZB heterodimers, which binds ACTR1A/ACTB filament and dynactin and stabilizes dynactin. Interacts with BICD2 and CEP135. Interacts with DYNAP. Interacts with ECPAS. Interacts with MAPRE1.

Its subcellular location is the cytoplasm. It is found in the cytoskeleton. It localises to the microtubule organizing center. The protein localises to the centrosome. The protein resides in the membrane. Its function is as follows. Part of the dynactin complex that activates the molecular motor dynein for ultra-processive transport along microtubules. In the dynactin soulder domain, binds the ACTR1A filament and acts as a molecular ruler to determine the length. Modulates cytoplasmic dynein binding to an organelle, and plays a role in prometaphase chromosome alignment and spindle organization during mitosis. Involved in anchoring microtubules to centrosomes. May play a role in synapse formation during brain development. In Rattus norvegicus (Rat), this protein is Dynactin subunit 2 (Dctn2).